The following is a 100-amino-acid chain: Large ribosomal subunit protein uL23 (100 aa).

Belongs to the universal ribosomal protein uL23 family. In terms of assembly, part of the 50S ribosomal subunit. Contacts protein L29, and trigger factor when it is bound to the ribosome.

Its function is as follows. One of the early assembly proteins it binds 23S rRNA. One of the proteins that surrounds the polypeptide exit tunnel on the outside of the ribosome. Forms the main docking site for trigger factor binding to the ribosome. The polypeptide is Large ribosomal subunit protein uL23 (Lacticaseibacillus casei (strain BL23) (Lactobacillus casei)).